The primary structure comprises 207 residues: Guanylate kinase (207 aa).

A Guanylate kinase-like domain is found at 5–184 (GNLFIVSAPS…ALADLRAIIR (180 aa)). Position 12-19 (12-19 (APSGAGKS)) interacts with ATP.

Belongs to the guanylate kinase family.

It is found in the cytoplasm. It carries out the reaction GMP + ATP = GDP + ADP. Its function is as follows. Essential for recycling GMP and indirectly, cGMP. This chain is Guanylate kinase, found in Shewanella sp. (strain MR-7).